The primary structure comprises 1112 residues: Mediator of RNA polymerase II transcription subunit 14 (1112 aa).

The protein belongs to the Mediator complex subunit 14 family. In terms of assembly, component of the Mediator complex.

It localises to the nucleus. Functionally, component of the Mediator complex, a coactivator involved in the regulated transcription of nearly all RNA polymerase II-dependent genes. Mediator functions as a bridge to convey information from gene-specific regulatory proteins to the basal RNA polymerase II transcription machinery. Mediator is recruited to promoters by direct interactions with regulatory proteins and serves as a scaffold for the assembly of a functional preinitiation complex with RNA polymerase II and the general transcription factors. This Scheffersomyces stipitis (strain ATCC 58785 / CBS 6054 / NBRC 10063 / NRRL Y-11545) (Yeast) protein is Mediator of RNA polymerase II transcription subunit 14 (RGR1).